The chain runs to 405 residues: Low-salt glycan biosynthesis sulfotransferase Agl7 (405 aa).

Ca(2+) contacts are provided by aspartate 24, aspartate 201, and histidine 202.

It belongs to the sulfatase family. The cofactor is Ca(2+).

Its pathway is protein modification; protein glycosylation. The protein operates within cell surface structure biogenesis; S-layer biogenesis. Involved in N-glycan biosynthetic pathway that takes place under low-salt conditions (1.75 M instead of 3.4 M). Participates in the formation of the tetrasaccharide present at 'Asn-532' of S-layer glycoprotein Csg, consisting of a sulfated hexose, 2 hexoses and rhamnose. Mediates sulfation of sugar 1 in the tetrasaccharide. The polypeptide is Low-salt glycan biosynthesis sulfotransferase Agl7 (Haloferax volcanii (strain ATCC 29605 / DSM 3757 / JCM 8879 / NBRC 14742 / NCIMB 2012 / VKM B-1768 / DS2) (Halobacterium volcanii)).